Reading from the N-terminus, the 264-residue chain is Apolipoprotein A-I (264 aa).

The N-terminal stretch at 1–18 is a signal peptide; it reads MKAVVLAVALVFLTGSQA. A run of 2 repeats spans residues 67–88 and 89–110. Positions 67–264 are 10 X approximate tandem repeats; it reads LNLLENWDTL…DKASETLTAQ (198 aa). Met109 is modified (methionine sulfoxide). Residues 111–121 form a 3; half-length repeat; that stretch reads KDLEEVKQKVQ. 3 consecutive repeat copies span residues 122-143, 144-165, and 166-187. Residues 188–207 form a 7; truncated repeat; it reads PHSEQMRESLAQRLAELKSN. Met193 carries the methionine sulfoxide modification. Repeat unit 8 spans residues 208-229; it reads PTLNEYHTRAKTHLKTLGEKAR. The stretch at 230–240 is one 9; half-length repeat; the sequence is PALEDLRHSLM. 2 positions are modified to methionine sulfoxide: Met240 and Met242. Repeat 10 spans residues 241-264; sequence PMLETLKTQVQSVIDKASETLTAQ.

This sequence belongs to the apolipoprotein A1/A4/E family. As to quaternary structure, homodimer. Interacts with APOA1BP and CLU. Component of a sperm activating protein complex (SPAP), consisting of APOA1, an immunoglobulin heavy chain, an immunoglobulin light chain and albumin. Interacts with NDRG1. Interacts with SCGB3A2. Interacts with NAXE and YJEFN3. Post-translationally, glycosylated. In terms of processing, palmitoylated. May be acylated. Post-translationally, phosphorylation sites are present in the extracellular medium. Major protein of plasma HDL, also found in chylomicrons.

Its subcellular location is the secreted. Functionally, participates in the reverse transport of cholesterol from tissues to the liver for excretion by promoting cholesterol efflux from tissues and by acting as a cofactor for the lecithin cholesterol acyltransferase (LCAT). As part of the SPAP complex, activates spermatozoa motility. The polypeptide is Apolipoprotein A-I (Apoa1) (Mus musculus (Mouse)).